We begin with the raw amino-acid sequence, 99 residues long: uncharacterized protein (99 aa).

This is an uncharacterized protein from Bacillus subtilis (strain 168).